A 294-amino-acid chain; its full sequence is Pyridoxal 5'-phosphate synthase subunit PdxS (294 aa).

Asp24 contributes to the D-ribose 5-phosphate binding site. Lys81 (schiff-base intermediate with D-ribose 5-phosphate) is an active-site residue. Gly153 contributes to the D-ribose 5-phosphate binding site. Arg165 is a D-glyceraldehyde 3-phosphate binding site. D-ribose 5-phosphate is bound by residues Gly214 and 235 to 236 (GS).

This sequence belongs to the PdxS/SNZ family. Homohexamer and homododecamer. In the presence of PdxT, forms a dodecamer of heterodimers.

It catalyses the reaction aldehydo-D-ribose 5-phosphate + D-glyceraldehyde 3-phosphate + L-glutamine = pyridoxal 5'-phosphate + L-glutamate + phosphate + 3 H2O + H(+). It participates in cofactor biosynthesis; pyridoxal 5'-phosphate biosynthesis. In terms of biological role, catalyzes the formation of pyridoxal 5'-phosphate from ribose 5-phosphate (RBP), glyceraldehyde 3-phosphate (G3P) and ammonia. The ammonia is provided by the PdxT subunit. Can also use ribulose 5-phosphate and dihydroxyacetone phosphate as substrates, resulting from enzyme-catalyzed isomerization of RBP and G3P, respectively. In Geobacillus kaustophilus (strain HTA426), this protein is Pyridoxal 5'-phosphate synthase subunit PdxS.